The sequence spans 133 residues: Holo-[acyl-carrier-protein] synthase (133 aa).

Mg(2+) is bound by residues Asp-8 and Glu-56.

The protein belongs to the P-Pant transferase superfamily. AcpS family. Mg(2+) serves as cofactor.

The protein resides in the cytoplasm. It catalyses the reaction apo-[ACP] + CoA = holo-[ACP] + adenosine 3',5'-bisphosphate + H(+). Its function is as follows. Transfers the 4'-phosphopantetheine moiety from coenzyme A to a Ser of acyl-carrier-protein. The chain is Holo-[acyl-carrier-protein] synthase from Clostridium perfringens (strain SM101 / Type A).